We begin with the raw amino-acid sequence, 726 residues long: NHL repeat-containing protein 2 (726 aa).

6 NHL repeats span residues 212-254, 265-307, 335-369, 409-439, 461-505, and 518-562; these read KLYK…VWKN, NPGR…IDLE, ISSPWDVVFGRSGPEVQRDNILWIAMAGTHQIWAL, FAQPSGLSLASEGPWSCLFVADSESSTVRTV, AFGD…VDPK, and ASNM…LDLE.

Monomer.

The protein resides in the cytoplasm. It is found in the cytosol. In terms of biological role, required for normal embryonic development. The polypeptide is NHL repeat-containing protein 2 (NHLRC2) (Bos taurus (Bovine)).